We begin with the raw amino-acid sequence, 107 residues long: Small ribosomal subunit protein eS25 (107 aa).

The interval 1–35 (MPPKQQLSKAAKAAAAMAGGKKSKKKWSKKSHKDK) is disordered. The segment covering 8-20 (SKAAKAAAAMAGG) has biased composition (low complexity). A compositionally biased stretch (basic residues) spans 21–35 (KKSKKKWSKKSHKDK).

It belongs to the eukaryotic ribosomal protein eS25 family.

This chain is Small ribosomal subunit protein eS25 (RPS25), found in Candida glabrata (strain ATCC 2001 / BCRC 20586 / JCM 3761 / NBRC 0622 / NRRL Y-65 / CBS 138) (Yeast).